Consider the following 148-residue polypeptide: MYVENSYLSKQLCFLFYVSSKEIIKKYTDYLKEYGLTYTGYIVLMAIEDDEKLNIKKLGERVFLDSGTLTPLLKKLEKKNYVIRTREEQDERNLQISLTERGKDIQNVLSDISQSVFNEFNITQEETQNLVEDLQNFVTKNFDKTVEK.

Positions 9–139 (SKQLCFLFYV…LVEDLQNFVT (131 aa)) constitute an HTH marR-type domain. The segment at residues 55-78 (IKKLGERVFLDSGTLTPLLKKLEK) is a DNA-binding region (H-T-H motif).

It belongs to the SarZ family.

Its subcellular location is the cytoplasm. The protein is HTH-type transcriptional regulator SarZ (sarZ) of Staphylococcus epidermidis (strain ATCC 35984 / DSM 28319 / BCRC 17069 / CCUG 31568 / BM 3577 / RP62A).